The chain runs to 294 residues: ATP synthase gamma chain (294 aa).

The protein belongs to the ATPase gamma chain family. F-type ATPases have 2 components, CF(1) - the catalytic core - and CF(0) - the membrane proton channel. CF(1) has five subunits: alpha(3), beta(3), gamma(1), delta(1), epsilon(1). CF(0) has three main subunits: a, b and c.

The protein resides in the cell inner membrane. Its function is as follows. Produces ATP from ADP in the presence of a proton gradient across the membrane. The gamma chain is believed to be important in regulating ATPase activity and the flow of protons through the CF(0) complex. This Paraburkholderia xenovorans (strain LB400) protein is ATP synthase gamma chain.